A 50-amino-acid chain; its full sequence is Large ribosomal subunit protein bL33 (50 aa).

It belongs to the bacterial ribosomal protein bL33 family.

This is Large ribosomal subunit protein bL33 (rpmG) from Aquifex aeolicus (strain VF5).